A 516-amino-acid polypeptide reads, in one-letter code: Solute carrier family 49 member A3 (516 aa).

The segment covering 1–10 has biased composition (basic and acidic residues); that stretch reads MAGTMDRLED. Residues 1–22 form a disordered region; the sequence is MAGTMDRLEDCNSPETSGTAGD. Transmembrane regions (helical) follow at residues 34–54, 74–94, 104–124, 139–159, 170–190, 199–219, 253–273, 289–309, 321–341, 344–364, 382–402, and 425–445; these read WVFL…WLSF, WLSL…IWVL, ILGA…CLPV, LCAL…ALWF, ISTM…PALV, MLGI…VCLW, VLLA…SALL, LCGA…GLYV, IGLC…QLQG, LALA…APVV, GLIF…LTAL, and VSLL…VIFF. Residues 453–516 form a disordered region; sequence EAESGGSSSP…EWAETMPRDV (64 aa). The span at 504 to 516 shows a compositional bias: basic and acidic residues; sequence GHSEWAETMPRDV.

Belongs to the major facilitator superfamily.

It is found in the membrane. The chain is Solute carrier family 49 member A3 (Slc49a3) from Mus musculus (Mouse).